The following is a 164-amino-acid chain: Thiol peroxidase (164 aa).

A Thioredoxin domain is found at 18–164; sequence KKVGDSAPDF…YEAVLSHLNK (147 aa). C60 functions as the Cysteine sulfenic acid (-SOH) intermediate in the catalytic mechanism. The cysteines at positions 60 and 94 are disulfide-linked.

It belongs to the peroxiredoxin family. Tpx subfamily. In terms of assembly, homodimer.

The catalysed reaction is a hydroperoxide + [thioredoxin]-dithiol = an alcohol + [thioredoxin]-disulfide + H2O. In terms of biological role, thiol-specific peroxidase that catalyzes the reduction of hydrogen peroxide and organic hydroperoxides to water and alcohols, respectively. Plays a role in cell protection against oxidative stress by detoxifying peroxides. The protein is Thiol peroxidase of Oceanobacillus iheyensis (strain DSM 14371 / CIP 107618 / JCM 11309 / KCTC 3954 / HTE831).